A 197-amino-acid chain; its full sequence is Molybdenum cofactor guanylyltransferase (197 aa).

Residues 10–12, lysine 23, aspartate 69, and aspartate 99 contribute to the GTP site; that span reads LAG. Aspartate 99 lines the Mg(2+) pocket.

The protein belongs to the MobA family. As to quaternary structure, monomer. It depends on Mg(2+) as a cofactor.

It localises to the cytoplasm. The catalysed reaction is Mo-molybdopterin + GTP + H(+) = Mo-molybdopterin guanine dinucleotide + diphosphate. Its function is as follows. Transfers a GMP moiety from GTP to Mo-molybdopterin (Mo-MPT) cofactor (Moco or molybdenum cofactor) to form Mo-molybdopterin guanine dinucleotide (Mo-MGD) cofactor. This chain is Molybdenum cofactor guanylyltransferase, found in Serratia proteamaculans (strain 568).